Here is a 161-residue protein sequence, read N- to C-terminus: NADH-quinone oxidoreductase subunit C (161 aa).

This sequence belongs to the complex I 30 kDa subunit family. As to quaternary structure, NDH-1 is composed of 14 different subunits. Subunits NuoB, C, D, E, F, and G constitute the peripheral sector of the complex.

It is found in the cell inner membrane. The catalysed reaction is a quinone + NADH + 5 H(+)(in) = a quinol + NAD(+) + 4 H(+)(out). NDH-1 shuttles electrons from NADH, via FMN and iron-sulfur (Fe-S) centers, to quinones in the respiratory chain. The immediate electron acceptor for the enzyme in this species is believed to be ubiquinone. Couples the redox reaction to proton translocation (for every two electrons transferred, four hydrogen ions are translocated across the cytoplasmic membrane), and thus conserves the redox energy in a proton gradient. The protein is NADH-quinone oxidoreductase subunit C of Citrifermentans bemidjiense (strain ATCC BAA-1014 / DSM 16622 / JCM 12645 / Bem) (Geobacter bemidjiensis).